Here is a 239-residue protein sequence, read N- to C-terminus: Serine protease SplF (239 aa).

A signal peptide spans 1 to 36; that stretch reads MNKNIIIKSIAALTILTSITGVGTTVVDGIQQTAKA. Residues His75, Asp114, and Ser192 each act as charge relay system in the active site.

Belongs to the peptidase S1B family.

Its subcellular location is the secreted. This is Serine protease SplF (splF) from Staphylococcus aureus (strain MSSA476).